The sequence spans 702 residues: Elongation factor G 2 (702 aa).

The 278-residue stretch at D8–A285 folds into the tr-type G domain. GTP-binding positions include A17–T24, D84–H88, and N138–D141.

It belongs to the TRAFAC class translation factor GTPase superfamily. Classic translation factor GTPase family. EF-G/EF-2 subfamily.

The protein resides in the cytoplasm. Its function is as follows. Catalyzes the GTP-dependent ribosomal translocation step during translation elongation. During this step, the ribosome changes from the pre-translocational (PRE) to the post-translocational (POST) state as the newly formed A-site-bound peptidyl-tRNA and P-site-bound deacylated tRNA move to the P and E sites, respectively. Catalyzes the coordinated movement of the two tRNA molecules, the mRNA and conformational changes in the ribosome. In Bdellovibrio bacteriovorus (strain ATCC 15356 / DSM 50701 / NCIMB 9529 / HD100), this protein is Elongation factor G 2.